The chain runs to 121 residues: Cytochrome c2 iso-2 (121 aa).

Heme c is bound by residues C15, C18, H19, and M98.

Belongs to the cytochrome c family. In terms of processing, binds 1 heme c group covalently per subunit.

Its function is as follows. Cytochrome c2 is found mainly in purple, non-sulfur, photosynthetic bacteria where it functions as the electron donor to the oxidized bacteriochlorophyll in the photophosphorylation pathway. However, it may also have a role in the respiratory chain and is found in some non-photosynthetic bacteria. This is Cytochrome c2 iso-2 from Rhodospirillum centenum (Rhodocista centenaria).